The primary structure comprises 1016 residues: Poly [ADP-ribose] polymerase 1 (1016 aa).

Residue Ala-2 is modified to N-acetylalanine. The PARP-type 1 zinc-finger motif lies at 9-93; it reads YRVEYAKSGR…TIKKMAETGG (85 aa). Zn(2+)-binding residues include Cys-21 and Cys-24. Ser-41 is subject to Phosphoserine. Zn(2+)-binding residues include His-53 and Cys-56. Lys-100 and Lys-108 each carry N6-acetyllysine. The segment at 116–206 adopts a PARP-type 2 zinc-finger fold; sequence FGAGYAKSNR…TLKKQLPAIK (91 aa). Positions 128 and 131 each coordinate Zn(2+). At Lys-134 the chain carries N6-acetyllysine. Residues His-162 and Cys-165 each coordinate Zn(2+). 2 positions are modified to phosphoserine: Ser-180 and Ser-188. Lys-206 is covalently cross-linked (Glycyl lysine isopeptide (Lys-Gly) (interchain with G-Cter in SUMO1); alternate). Lys-206 participates in a covalent cross-link: Glycyl lysine isopeptide (Lys-Gly) (interchain with G-Cter in SUMO2); alternate. Short sequence motifs (nuclear localization signal) lie at residues 210–212 and 224–229; these read KRK and KKKSKK. A PADR1 zinc-binding domain is found at 228 to 362; that stretch reads KKEKDKEIKL…IKKQDRIFPP (135 aa). A Glycyl lysine isopeptide (Lys-Gly) (interchain with G-Cter in SUMO2) cross-link involves residue Lys-252. Phosphoserine is present on residues Ser-277 and Ser-280. A zinc ribbon region spans residues 293 to 335; it reads GALLPCEECSGQLVFKGDAYYCTGDVTAWTKCMVKTQTPNRKE. Residues Cys-298, Cys-301, Cys-314, and Cys-324 each contribute to the Zn(2+) site. Residues 360 to 390 form a disordered region; sequence FPPESSTPVGAAAPPSAASAPAAVHSGPPDK. The span at 365–386 shows a compositional bias: low complexity; it reads STPVGAAAPPSAASAPAAVHSG. The segment at 376–526 is automodification domain; that stretch reads AASAPAAVHS…GTNKSEKRMK (151 aa). In terms of domain architecture, BRCT spans 387 to 478; it reads PPDKPLSNMK…KSLQELLSTH (92 aa). PolyADP-ribosyl aspartic acid is present on Asp-389. PolyADP-ribosyl glutamic acid occurs at positions 409, 415, 437, 446, 447, 450, and 458. Lys-469 participates in a covalent cross-link: Glycyl lysine isopeptide (Lys-Gly) (interchain with G-Cter in SUMO2). A polyADP-ribosyl glutamic acid mark is found at Glu-473 and Glu-486. Residue Lys-488 forms a Glycyl lysine isopeptide (Lys-Gly) (interchain with G-Cter in SUMO1); alternate linkage. Lys-488 is covalently cross-linked (Glycyl lysine isopeptide (Lys-Gly) (interchain with G-Cter in SUMO2); alternate). PolyADP-ribosyl glutamic acid occurs at positions 490 and 493. A disordered region spans residues 494 to 523; it reads AVGPKGKSGAAPSKKSKGPVKEEGTNKSEK. Residues 496–506 are compositionally biased toward low complexity; the sequence is GPKGKSGAAPS. ADP-ribosylserine occurs at positions 501, 506, and 509. Basic and acidic residues predominate over residues 512-523; that stretch reads PVKEEGTNKSEK. Residue Lys-514 forms a Glycyl lysine isopeptide (Lys-Gly) (interchain with G-Cter in SUMO2) linkage. Residues Glu-515 and Glu-516 each carry the polyADP-ribosyl glutamic acid modification. The residue at position 521 (Ser-521) is an ADP-ribosylserine. The residue at position 522 (Glu-522) is a PolyADP-ribosyl glutamic acid. Lys-523 bears the N6-(ADP-ribosyl)lysine mark. A Glycyl lysine isopeptide (Lys-Gly) (interchain with G-Cter in SUMO2) cross-link involves residue Lys-530. Positions 544–640 constitute a WGR domain; that stretch reads NAHVLEKGGK…KNFTKHPKKF (97 aa). Position 596 is a phosphothreonine (Thr-596). 2 positions are modified to N6-acetyllysine: Lys-602 and Lys-623. Residues 664–781 enclose the PARP alpha-helical domain; that stretch reads KSKLPKPVQN…DIEVAYSLLR (118 aa). Residue Lys-750 forms a Glycyl lysine isopeptide (Lys-Gly) (interchain with G-Cter in SUMO1); alternate linkage. Lys-750 is covalently cross-linked (Glycyl lysine isopeptide (Lys-Gly) (interchain with G-Cter in SUMO2); alternate). A phosphoserine mark is found at Ser-784 and Ser-788. The PARP catalytic domain occupies 790 to 1016; that stretch reads DPIDVNYEKL…LKFNFKTSLW (227 aa). Residues 864–866, Gly-873, Arg-880, and Ser-906 contribute to the NAD(+) site; that span reads HGS. The For poly [ADP-ribose] polymerase activity role is filled by Glu-990.

The protein belongs to the ARTD/PARP family. In terms of assembly, homodimer; PARP-type zinc-fingers from separate PARP1 molecules form a dimer module that specifically recognizes DNA strand breaks. Heterodimer; heterodimerizes with PARP2. Interacts (via the PARP catalytic domain) with HPF1. Interacts with NMNAT1. Interacts with nucleosomes; with a preference for nucleosomes containing H2A.X. Interacts with APTX. Component of a base excision repair (BER) complex, containing at least XRCC1, PARP1, PARP2, POLB and LRIG3. Interacts with SRY. The SWAP complex consists of NPM1, NCL, PARP1 and SWAP70. Interacts with TIAM2. Interacts with PARP3; leading to activate PARP1 in absence of DNA. Interacts (when poly-ADP-ribosylated) with CHD1L (via macro domain). Interacts with the DNA polymerase alpha catalytic subunit POLA1; this interaction functions as part of the control of replication fork progression. Interacts with EEF1A1 and TXK. Interacts with RNF4. Interacts with RNF146. Interacts with ZNF423. Interacts with APLF. Interacts with SNAI1 (via zinc fingers); the interaction requires SNAI1 to be poly-ADP-ribosylated and non-phosphorylated (active) by GSK3B. Interacts (when poly-ADP-ribosylated) with PARP9. Interacts with NR4A3; activates PARP1 by improving acetylation of PARP1 and suppressing the interaction between PARP1 and SIRT1. Interacts (via catalytic domain) with PUM3; the interaction inhibits the poly-ADP-ribosylation activity of PARP1 and the degradation of PARP1 by CASP3 following genotoxic stress. Interacts with ZNF365. Interacts with RRP1B. Interacts with TIMELESS; the interaction is direct. Interacts with CGAS; leading to impede the formation of the PARP1-TIMELESS complex. Interacts with KHDC3L, the interaction is increased following the formation of DNA double-strand breaks. Interacts (when auto-poly-ADP-ribosylated) with XRCC1; leading to inhibit PARP1 ADP-ribosyltransferase activity. Interacts with SPINDOC; promoting PARP1 ADP-ribosyltransferase activity. Interacts with BANF1; leading to inhibit PARP1 ADP-ribosyltransferase activity in response to oxidative DNA damage. Interacts (when sumoylated and ubiquitinated) with VCP/p97; leading to its extraction from chromatin. Interacts with YARS1; promoting PARP1 ADP-ribosyltransferase activity. Interacts with PACMP micropeptide; Interacts with PACMP micropeptide; interaction. Interacts (when poly-ADP-ribosylated) with isoform 1 of MACROH2A1; MACROH2A1 specifically binds to poly-ADP-ribose chains and inhibits PARP1 activity, limiting the consumption of nuclear NAD(+). Interacts with CARM1; promoting recruitment to replication forks. Interacts with RECQL. Interacts with ZNF32; the interaction reshapes ZNF432 interacting proteins. Interacts with TPRN; TPRN interacts with a number of DNA damage response proteins, is recruited to sites of DNA damage and may play a role in DNA damage repair. As to quaternary structure, interacts (when auto-poly-ADP-ribosylated) with AIFM1. Post-translationally, poly-ADP-ribosylated on serine, glutamate and aspartate residues by autocatalysis. Auto-ADP-ribosylation on serine takes place following interaction with HPF1. Auto poly-ADP-ribosylation on serine residues promotes its dissociation from chromatin. Poly-ADP-ribosylated by PARP2; poly-ADP-ribosylation mediates the recruitment of CHD1L to DNA damage sites. Mono-ADP-ribosylated at Lys-523 by SIRT6 in response to oxidative stress, promoting recruitment to double-strand breaks (DSBs) sites. S-nitrosylated, leading to inhibit transcription regulation activity. In terms of processing, phosphorylated at Thr-596 by PRKDC in response to DNA damage following virus infection, promoting its translocation to the cytosol. Phosphorylated by TXK. Post-translationally, proteolytically cleaved by caspase-3 (CASP3) and caspase-7 (CASP7) in response to apoptosis to generate the Poly [ADP-ribose] polymerase 1, processed N-terminus and Poly [ADP-ribose] polymerase 1, processed C-terminus forms. Sumoylated with SUMO1 or SUMO2 by PIAS4 following prolonged residence (trapping) to chromatin. Sumoylation promotes ubiquitination by RNF4 and removal from chromatin by VCP/p97. In terms of processing, ubiquitinated by RNF4 following sumoylation by PIAS4 in response to prolonged residence (trapping) to chromatin. Ubiquitination promotes removal from chromatin by VCP/p97.

The protein localises to the chromosome. The protein resides in the nucleus. It localises to the nucleolus. It is found in the cytoplasm. Its subcellular location is the cytosol. It carries out the reaction NAD(+) + (ADP-D-ribosyl)n-acceptor = nicotinamide + (ADP-D-ribosyl)n+1-acceptor + H(+).. It catalyses the reaction L-seryl-[protein] + NAD(+) = O-(ADP-D-ribosyl)-L-seryl-[protein] + nicotinamide + H(+). The catalysed reaction is L-aspartyl-[protein] + NAD(+) = 4-O-(ADP-D-ribosyl)-L-aspartyl-[protein] + nicotinamide. The enzyme catalyses L-glutamyl-[protein] + NAD(+) = 5-O-(ADP-D-ribosyl)-L-glutamyl-[protein] + nicotinamide. It carries out the reaction L-tyrosyl-[protein] + NAD(+) = O-(ADP-D-ribosyl)-L-tyrosyl-[protein] + nicotinamide + H(+). It catalyses the reaction L-histidyl-[protein] + NAD(+) = N(tele)-(ADP-D-ribosyl)-L-histidyl-[protein] + nicotinamide + H(+). Its activity is regulated as follows. ADP-ribosyltransferase activity is regulated via an allosteric activation mechanism. In absence of activation signal, PARP1 is autoinhibited by the PARP alpha-helical domain (also named HD region), which prevents effective NAD(+)-binding. Activity is highly stimulated by signals, such as DNA strand breaks. Binding to damaged DNA unfolds the PARP alpha-helical domain, relieving autoinhibition. Poly-ADP-ribosyltransferase activity is tightly regulated and PARP1 is removed from damaged chromatin following initial poly-ADP-ribosylation of chromatin to avoid prolonged residence (trapping) that has cytotoxic consequences. A number of factors (VCP/p97) or post-translational modifications (auto-poly-ADP-ribosylation or ubiquitination) promote PARP1 removal from chromatin. In terms of biological role, poly-ADP-ribosyltransferase that mediates poly-ADP-ribosylation of proteins and plays a key role in DNA repair. Mediates glutamate, aspartate, serine, histidine or tyrosine ADP-ribosylation of proteins: the ADP-D-ribosyl group of NAD(+) is transferred to the acceptor carboxyl group of target residues and further ADP-ribosyl groups are transferred to the 2'-position of the terminal adenosine moiety, building up a polymer with an average chain length of 20-30 units. Serine ADP-ribosylation of proteins constitutes the primary form of ADP-ribosylation of proteins in response to DNA damage. Specificity for the different amino acids is conferred by interacting factors, such as HPF1 and NMNAT1. Following interaction with HPF1, catalyzes serine ADP-ribosylation of target proteins; HPF1 confers serine specificity by completing the PARP1 active site. Also catalyzes tyrosine ADP-ribosylation of target proteins following interaction with HPF1. Following interaction with NMNAT1, catalyzes glutamate and aspartate ADP-ribosylation of target proteins; NMNAT1 confers glutamate and aspartate specificity. PARP1 initiates the repair of DNA breaks: recognizes and binds DNA breaks within chromatin and recruits HPF1, licensing serine ADP-ribosylation of target proteins, such as histones (H2BS6ADPr and H3S10ADPr), thereby promoting decompaction of chromatin and the recruitment of repair factors leading to the reparation of DNA strand breaks. HPF1 initiates serine ADP-ribosylation but restricts the polymerase activity of PARP1 in order to limit the length of poly-ADP-ribose chains. In addition to base excision repair (BER) pathway, also involved in double-strand breaks (DSBs) repair: together with TIMELESS, accumulates at DNA damage sites and promotes homologous recombination repair by mediating poly-ADP-ribosylation. Mediates the poly-ADP-ribosylation of a number of proteins, including itself, APLF, CHFR and NFAT5. In addition to proteins, also able to ADP-ribosylate DNA: catalyzes ADP-ribosylation of DNA strand break termini containing terminal phosphates and a 2'-OH group in single- and double-stranded DNA, respectively. Required for PARP9 and DTX3L recruitment to DNA damage sites. PARP1-dependent PARP9-DTX3L-mediated ubiquitination promotes the rapid and specific recruitment of 53BP1/TP53BP1, UIMC1/RAP80, and BRCA1 to DNA damage sites. PARP1-mediated DNA repair in neurons plays a role in sleep: senses DNA damage in neurons and promotes sleep, facilitating efficient DNA repair. In addition to DNA repair, also involved in other processes, such as transcription regulation, programmed cell death, membrane repair, adipogenesis and innate immunity. Acts as a repressor of transcription: binds to nucleosomes and modulates chromatin structure in a manner similar to histone H1, thereby altering RNA polymerase II. Acts both as a positive and negative regulator of transcription elongation, depending on the context. Acts as a positive regulator of transcription elongation by mediating poly-ADP-ribosylation of NELFE, preventing RNA-binding activity of NELFE and relieving transcription pausing. Acts as a negative regulator of transcription elongation in response to DNA damage by catalyzing poly-ADP-ribosylation of CCNT1, disrupting the phase separation activity of CCNT1 and subsequent activation of CDK9. Involved in replication fork progression following interaction with CARM1: mediates poly-ADP-ribosylation at replication forks, slowing fork progression. Poly-ADP-ribose chains generated by PARP1 also play a role in poly-ADP-ribose-dependent cell death, a process named parthanatos. Also acts as a negative regulator of the cGAS-STING pathway. Acts by mediating poly-ADP-ribosylation of CGAS: PARP1 translocates into the cytosol following phosphorylation by PRKDC and catalyzes poly-ADP-ribosylation and inactivation of CGAS. Acts as a negative regulator of adipogenesis: catalyzes poly-ADP-ribosylation of histone H2B on 'Glu-35' (H2BE35ADPr) following interaction with NMNAT1, inhibiting phosphorylation of H2B at 'Ser-36' (H2BS36ph), thereby blocking expression of pro-adipogenetic genes. Involved in the synthesis of ATP in the nucleus, together with NMNAT1, PARG and NUDT5. Nuclear ATP generation is required for extensive chromatin remodeling events that are energy-consuming. Its function is as follows. Promotes AIFM1-mediated apoptosis. This form, which translocates into the cytoplasm following cleavage by caspase-3 (CASP3) and caspase-7 (CASP7) in response to apoptosis, is auto-poly-ADP-ribosylated and serves as a poly-ADP-ribose carrier to induce AIFM1-mediated apoptosis. This cleavage form irreversibly binds to DNA breaks and interferes with DNA repair, promoting DNA damage-induced apoptosis. The polypeptide is Poly [ADP-ribose] polymerase 1 (PARP1) (Bos taurus (Bovine)).